A 223-amino-acid polypeptide reads, in one-letter code: Deoxyribose-phosphate aldolase (223 aa).

Catalysis depends on aspartate 89, which acts as the Proton donor/acceptor. The active-site Schiff-base intermediate with acetaldehyde is the lysine 154. Lysine 183 acts as the Proton donor/acceptor in catalysis.

The protein belongs to the DeoC/FbaB aldolase family. DeoC type 1 subfamily.

It is found in the cytoplasm. The catalysed reaction is 2-deoxy-D-ribose 5-phosphate = D-glyceraldehyde 3-phosphate + acetaldehyde. It functions in the pathway carbohydrate degradation; 2-deoxy-D-ribose 1-phosphate degradation; D-glyceraldehyde 3-phosphate and acetaldehyde from 2-deoxy-alpha-D-ribose 1-phosphate: step 2/2. Catalyzes a reversible aldol reaction between acetaldehyde and D-glyceraldehyde 3-phosphate to generate 2-deoxy-D-ribose 5-phosphate. This Thermoanaerobacter pseudethanolicus (strain ATCC 33223 / 39E) (Clostridium thermohydrosulfuricum) protein is Deoxyribose-phosphate aldolase.